Reading from the N-terminus, the 433-residue chain is MDGIKLLLSIIILYFYTYINCAIAEPNLIDQVVAIVNNDIILESELKILRDSIQNYAKLNYQEQLEDNQLNKHIIDRLIIKKIIQQQAKLSHITIAETKLNKIIHDLTSSQNLSIAKLRHLMYSNRNIYDIYRAQLRQDLLIAEVLNSALHRRITILPQEVEFLAKKIAIRKNTTFNLSHMLIPLPEKPSRKQKNEAEALALFLMAQSEKQNDFRELAIKYSTDTQMLNSFSMIGIQHTKLPLILAKHLYGAQKGSVIGPIYSDIGIHILKVHDMIRTHMSNIPITEVYARHILLRTSVKRNDNQARVQLLNIARKINIGDISFSIVAKQISEDIISSQQGGDLGWNALNAFTPTFRKLLLSLNKGQLSIPVRSSQGWHLIQLQNIRQVENTTNKEAAYRILWHRKLAEIAHIWIQEQRDLAYIKIINHHDNR.

The N-terminal stretch at 1 to 24 (MDGIKLLLSIIILYFYTYINCAIA) is a signal peptide. PpiC domains follow at residues 173-274 (NTTF…KVHD) and 285-385 (ITEV…QLQN).

Its subcellular location is the periplasm. The catalysed reaction is [protein]-peptidylproline (omega=180) = [protein]-peptidylproline (omega=0). Its function is as follows. Chaperone involved in the correct folding and assembly of outer membrane proteins. Recognizes specific patterns of aromatic residues and the orientation of their side chains, which are found more frequently in integral outer membrane proteins. May act in both early periplasmic and late outer membrane-associated steps of protein maturation. The chain is Chaperone SurA from Baumannia cicadellinicola subsp. Homalodisca coagulata.